Reading from the N-terminus, the 1114-residue chain is Proto-oncogene tyrosine-protein kinase receptor Ret (1114 aa).

A signal peptide spans 1-28; sequence MAKATSGAAGLRLLLLLLLPLLGKVALG. Residues 29-153 form a cadherin-like region 1 (CLD1) region; the sequence is LYFSRDAYWE…RVYFSFFNTS (125 aa). Over 29 to 635 the chain is Extracellular; it reads LYFSRDAYWE…QDPLCDELCR (607 aa). Asparagine 98 is a glycosylation site (N-linked (GlcNAc...) asparagine). An intrachain disulfide couples cysteine 137 to cysteine 142. N-linked (GlcNAc...) asparagine glycosylation is present at asparagine 151. Intrachain disulfides connect cysteine 157–cysteine 197 and cysteine 166–cysteine 243. The Cadherin domain occupies 168–272; the sequence is PETRPSFRIR…YDEDDSAPTF (105 aa). 2 residues coordinate Ca(2+): glutamate 178 and asparagine 179. N-linked (GlcNAc...) asparagine glycosylation is present at asparagine 199. Residues aspartate 230, glutamate 232, aspartate 264, glutamate 265, aspartate 266, aspartate 267, serine 268, aspartate 300, and aspartate 302 each contribute to the Ca(2+) site. The interval 265 to 379 is cadherin-like region 3 (CLD3); that stretch reads EDDSAPTFPA…MQLAVLVNDS (115 aa). 5 N-linked (GlcNAc...) asparagine glycosylation sites follow: asparagine 336, asparagine 343, asparagine 361, asparagine 367, and asparagine 377. Aspartate 378 serves as a coordination point for Ca(2+). Asparagine 394 carries an N-linked (GlcNAc...) asparagine glycan. The interval 405–506 is cadherin-like region 4 (CLD4); that stretch reads PSTYSLSVSR…QAQLLVTVEG (102 aa). Cysteine 426 and cysteine 430 are joined by a disulfide. 2 N-linked (GlcNAc...) asparagine glycosylation sites follow: asparagine 448 and asparagine 468. 4 disulfides stabilise this stretch: cysteine 449/cysteine 478, cysteine 515/cysteine 531, cysteine 519/cysteine 541, and cysteine 528/cysteine 558. Asparagine 554 carries an N-linked (GlcNAc...) asparagine glycan. Threonine 564, cysteine 565, aspartate 567, histidine 569, glutamate 574, and aspartate 584 together coordinate Ca(2+). 5 disulfide bridges follow: cysteine 565/cysteine 581, cysteine 570/cysteine 585, cysteine 609/cysteine 620, cysteine 611/cysteine 618, and cysteine 630/cysteine 634. A helical membrane pass occupies residues 636-657; it reads TVIAAAVLFSFIVSVLLSAFCI. Over 658-1114 the chain is Cytoplasmic; it reads HCYHKFAHKP…AAKLMDTFDS (457 aa). The residue at position 687 (tyrosine 687) is a Phosphotyrosine; by autocatalysis. Residue serine 688 is glycosylated (O-linked (GlcNAc) serine). Serine 696 bears the Phosphoserine mark. The 293-residue stretch at 724–1016 folds into the Protein kinase domain; sequence LVLGKTLGEG…KMMVKRRDYL (293 aa). Residues 730 to 738 and lysine 758 contribute to the ATP site; that span reads LGEGEFGKV. 805–807 contacts semaxanib; that stretch reads EYA. A phosphotyrosine; by autocatalysis mark is found at tyrosine 806, tyrosine 809, and tyrosine 826. Aspartate 874 serves as the catalytic Proton acceptor. Phosphotyrosine; by autocatalysis is present on residues tyrosine 900, tyrosine 905, tyrosine 981, tyrosine 1015, tyrosine 1029, tyrosine 1062, tyrosine 1090, and tyrosine 1096.

It belongs to the protein kinase superfamily. Tyr protein kinase family. As to quaternary structure, phosphorylated form interacts with the PBT domain of DOK2, DOK4 and DOK5. The phosphorylated form interacts with PLCG1 and GRB7. Interacts (not phosphorylated) with PTK2/FAK1 (via FERM domain). Extracellular cell-membrane anchored RET cadherin fragments form complex in neurons with reduced trophic status, preferentially at the contact sites between somas. Interacts with AIP in the pituitary gland; this interaction prevents the formation of the AIP-survivin complex. Interacts (inactive) with CBLC and CD2AP; dissociates upon activation by GDNF which increases CBLC:CD2AP interaction. Ca(2+) is required as a cofactor. Post-translationally, autophosphorylated on C-terminal tyrosine residues upon ligand stimulation. Proteolytically cleaved by caspase-3. The soluble RET kinase fragment is able to induce cell death. The extracellular cell-membrane anchored RET cadherin fragment accelerates cell adhesion in sympathetic neurons.

The protein localises to the cell membrane. It localises to the endosome membrane. The catalysed reaction is L-tyrosyl-[protein] + ATP = O-phospho-L-tyrosyl-[protein] + ADP + H(+). With respect to regulation, repressed by 4-(3-hydroxyanilino)-quinolines derivatives, indolin-2-one-derivatives, 2-(alkylsulfanyl)-4-(3-thienyl) nicotinonitrile analogs, 3- and 4-substituted beta-carbolin-1-ones, vandetanib, motesanib, sorafenib (BAY 43-9006), cabozantinib (XL184), lenvatinib, sunitinib, nintedanib, and withaferin A (WA). Inactivation by sorafenib both reduces kinase activity and promotes lysosomal degradation. Receptor tyrosine-protein kinase involved in numerous cellular mechanisms including cell proliferation, neuronal navigation, cell migration, and cell differentiation in response to glia cell line-derived growth family factors (GDNF, NRTN, ARTN, PSPN and GDF15). In contrast to most receptor tyrosine kinases, RET requires not only its cognate ligands but also coreceptors, for activation. GDNF ligands (GDNF, NRTN, ARTN, PSPN and GDF15) first bind their corresponding GDNFR coreceptors (GFRA1, GFRA2, GFRA3, GFRA4 and GFRAL, respectively), triggering RET autophosphorylation and activation, leading to activation of downstream signaling pathways, including the MAPK- and AKT-signaling pathways. Acts as a dependence receptor via the GDNF-GFRA1 signaling: in the presence of the ligand GDNF in somatotrophs within pituitary, promotes survival and down regulates growth hormone (GH) production, but triggers apoptosis in absence of GDNF. Required for the molecular mechanisms orchestration during intestine organogenesis via the ARTN-GFRA3 signaling: involved in the development of enteric nervous system and renal organogenesis during embryonic life, and promotes the formation of Peyer's patch-like structures, a major component of the gut-associated lymphoid tissue. Mediates, through interaction with GDF15-receptor GFRAL, GDF15-induced cell-signaling in the brainstem which triggers an aversive response, characterized by nausea, vomiting, and/or loss of appetite in response to various stresses. Modulates cell adhesion via its cleavage by caspase in sympathetic neurons and mediates cell migration in an integrin (e.g. ITGB1 and ITGB3)-dependent manner. Also active in the absence of ligand, triggering apoptosis through a mechanism that requires receptor intracellular caspase cleavage. Triggers the differentiation of rapidly adapting (RA) mechanoreceptors. Involved in the development of the neural crest. Regulates nociceptor survival and size. Phosphorylates PTK2/FAK1. In terms of biological role, isoform 1 in complex with GFRAL induces higher activation of MAPK-signaling pathway than isoform 2 in complex with GFRAL. The protein is Proto-oncogene tyrosine-protein kinase receptor Ret of Homo sapiens (Human).